The primary structure comprises 217 residues: Cytidylate kinase (217 aa).

G10–T18 contacts ATP.

Belongs to the cytidylate kinase family. Type 1 subfamily.

It is found in the cytoplasm. The enzyme catalyses CMP + ATP = CDP + ADP. The catalysed reaction is dCMP + ATP = dCDP + ADP. This is Cytidylate kinase from Clostridium botulinum (strain Okra / Type B1).